Reading from the N-terminus, the 186-residue chain is Potassium-transporting ATPase KdpC subunit (186 aa).

The helical transmembrane segment at 10–30 (LTIITMVLCGFLFPLAITLIG) threads the bilayer.

It belongs to the KdpC family. The system is composed of three essential subunits: KdpA, KdpB and KdpC.

It is found in the cell membrane. Part of the high-affinity ATP-driven potassium transport (or Kdp) system, which catalyzes the hydrolysis of ATP coupled with the electrogenic transport of potassium into the cytoplasm. This subunit acts as a catalytic chaperone that increases the ATP-binding affinity of the ATP-hydrolyzing subunit KdpB by the formation of a transient KdpB/KdpC/ATP ternary complex. The polypeptide is Potassium-transporting ATPase KdpC subunit (Staphylococcus aureus (strain MSSA476)).